A 650-amino-acid chain; its full sequence is Protein ANTI-SILENCING 1 (650 aa).

The BAH domain maps to 38–169; sequence DEYRLYDCVL…VGSCKVVDTI (132 aa). 4 disordered regions span residues 202–223, 229–248, 257–359, and 425–448; these read NGKS…GSVR, AFES…EKEK, KSTL…QKLD, and VTEK…ADDN. Composition is skewed to basic and acidic residues over residues 259–270 and 277–287; these read TLAEERSNKDSG and NGKDQESEVKK. A compositionally biased stretch (polar residues) spans 302-315; the sequence is SNSFEASGSRTIHS. 2 stretches are compositionally biased toward basic and acidic residues: residues 348–358 and 438–448; these read LDDRPLKKQKL and RAEDKMSADDN. One can recognise an RRM domain in the interval 486-569; that stretch reads TVVLLQNLDP…RPLVASFAKI (84 aa).

Component of the ASI1-AIPP1-EDM2 (AAE) RNA regulatory complex composed of at least AIPP1/EDM3, ASI1 and EDM2 and may contain CPL2, AIPP2 and AIPP3/BDT1. Binds directly to AIPP1/EDM3 and AIPP2.

Collaboratively with AIPP1/EDM3 and EDM2, the AAE complex regulates alternative RNA processing (e.g. alternative splicing) and epigenetic silencing (e.g. H3K9me2) of intronic heterochromatin-containing genes as well as genic heterochromatin-containing genes by promoting distal 3' polyadenylation; may associate with intronic heterochromatin and bind gene transcripts to modulate polyadenylation. Required to prevent promoter DNA hypermethylation and transcriptional silencing of some transgenes. Plays a similar role to that of the histone H3K9 demethylase JMJ25/IBM1 in preventing CHG methylation in the bodies of numerous genes. RNA-binding protein that ensures the proper expression of JMJ25/IBM1 full-length transcript by associating with an intronic heterochromatic repeat element of JMJ25/IBM1. Also modulates transposable elements (TE) expression. Contributes to a unique mechanism to deal with the collateral effect of silencing intronic repeat elements. The sequence is that of Protein ANTI-SILENCING 1 from Arabidopsis thaliana (Mouse-ear cress).